The sequence spans 213 residues: Orotate phosphoribosyltransferase (213 aa).

K26 lines the 5-phospho-alpha-D-ribose 1-diphosphate pocket. Orotate is bound at residue 34-35 (FF). Residues 72–73 (YK), R99, K100, K103, H105, and 124–132 (DDVITAGTA) each bind 5-phospho-alpha-D-ribose 1-diphosphate. Positions 128 and 156 each coordinate orotate.

It belongs to the purine/pyrimidine phosphoribosyltransferase family. PyrE subfamily. In terms of assembly, homodimer. The cofactor is Mg(2+).

It catalyses the reaction orotidine 5'-phosphate + diphosphate = orotate + 5-phospho-alpha-D-ribose 1-diphosphate. Its pathway is pyrimidine metabolism; UMP biosynthesis via de novo pathway; UMP from orotate: step 1/2. Catalyzes the transfer of a ribosyl phosphate group from 5-phosphoribose 1-diphosphate to orotate, leading to the formation of orotidine monophosphate (OMP). This is Orotate phosphoribosyltransferase from Pectobacterium carotovorum subsp. carotovorum (strain PC1).